We begin with the raw amino-acid sequence, 359 residues long: MSKIFDFVKPGVITGDDVQKVFQVAKENNFALPAVNCVGTDSINAVLETAAKVKAPVIVQFSNGGASFIAGKGVKSDVPQGAAILGAISGAHHVHQMAEHYGVPVILHTDHCAKKLLPWIDGLLDAGEKHFAATGKPLFSSHMIDLSEESLQENIEICSKYLERMSKIGMTLEIELGCTGGEEDGVDNSHMDASALYTQPEDVDYAYTELSKISPRFTIAASFGNVHGVYKPGNVVLTPTILRDSQEYVSKKHNLPHNSLNFVFHGGSGSTAQEIKDSVSYGVVKMNIDTDTQWATWEGVLNYYKANEAYLQGQLGNPKGEDQPNKKYYDPRVWLRAGQTSMIARLEKAFQELNAIDVL.

Lysine 9 bears the N6-acetyllysine mark. Serine 62 lines the D-glyceraldehyde 3-phosphate pocket. Aspartate 110 (proton donor) is an active-site residue. Residues histidine 111, aspartate 145, glutamate 175, and histidine 227 each contribute to the Zn(2+) site. Glycine 228 contacts dihydroxyacetone phosphate. Histidine 265 provides a ligand contact to Zn(2+). Dihydroxyacetone phosphate contacts are provided by residues 266–268 (GGS) and 287–290 (NIDT).

Belongs to the class II fructose-bisphosphate aldolase family. In terms of assembly, homodimer. Zn(2+) is required as a cofactor.

It carries out the reaction beta-D-fructose 1,6-bisphosphate = D-glyceraldehyde 3-phosphate + dihydroxyacetone phosphate. It participates in carbohydrate degradation; glycolysis; D-glyceraldehyde 3-phosphate and glycerone phosphate from D-glucose: step 4/4. Functionally, catalyzes the aldol condensation of dihydroxyacetone phosphate (DHAP or glycerone-phosphate) with glyceraldehyde 3-phosphate (G3P) to form fructose 1,6-bisphosphate (FBP) in gluconeogenesis and the reverse reaction in glycolysis. The polypeptide is Fructose-bisphosphate aldolase class 2 (fbaA) (Escherichia coli O157:H7).